The following is a 984-amino-acid chain: MLQGVSDLSIKQLLLGVNNVGSVHLSDIPSTRARNFLRGTDPTSFKQTCRALEKIKNSCTESDFKKALLFVRSSSLFDGTEIGQLFIDRCPNESNELDVKYSLSEILRYINQFADELIVLSDCAAKIIKHIDKGNYGTALDYCSNLADMKGTSVFLIRQLSYITNRYQLLELDDSEILRKIDYMKQRISLSRSSFLEGAVTQLSNLRTSYIATSKRIQDIKEDFQGKEIAKSFVQPIPSNLHEFESVLSDYFSFSLFDAFLYIAKFQSFSLQYLPSNQLDVDLFLSYKKISSIKFSPEKMYKTVDEDAGYYYFRESFLFNEQKGALRFQSIHGYYYYDAFRSNLKNLIQKQLVNDYFSNVNSLEQLKYTNSDNYVVKSEKYDSTTCGMLENSTALIHLLERKQGKLDTREQELFVELMSYTRDVGEVCPKEILATISSIAQCFRLKLVVNCLITINNKTQVSEHQLRSTIQDYCIEKFGGDLNLLIQHLYDISPAVAEHLLLTCDEKFLATLFRIVDRPVDAIKVRADMLYWYGKISSEERYLDRAKMLKIDIQINKEKGTIDDSRIYVDPFKYTQWFEDQMVGKLTMAIDNLLISEHAVVNPNWKHMGVGTTGDVIELLLACYKEFCDNKSFGIASYLGRRIRHGTFEGTASTELKALYTNEEYKHLFEDKEFATKFDEWLNQYELMISELKKNALQIKSKRKPSGCFSTDIDTPQKKIVADQLIFEILRIYSKRSGVIRLPSVIIDYCWRLVELDLTATKKLLSEKKSSHGVFSYTPKFGSSSYKRQYSKFSQEVNSLTSQKFGLMASWFNKPNYASPSTDIYLLFNAVISEVKDSFRDFEPKIDQGQRSFTINGGTYYVIYDALFVLIHNAARHGKSDGKMNFFVSIPEDRTNAIRLQLFTELDSIDSVDKALSNIEEALLNTQGDADEFDNKSGMKKLKKLENEGSISELQFYSKPEENMLCFDFHFELDSRGKYDDLDS.

The residue at position 645 (His645) is a Phosphohistidine; by autocatalysis.

Post-translationally, autophosphorylated.

The catalysed reaction is ATP + protein L-histidine = ADP + protein N-phospho-L-histidine.. Functionally, sensor-kinase member of the two-component regulatory system Detocs that confers resistance to bacteriophage. When the system (DtcA-DtcB-DtcC) is expressed in a susceptible E.coli (strain MG1655) it confers resistance to bacteriophages T2, T4, T5, T6 and SECphi27. Detocs inhibits T5 infection leading to growth arrest but not complete cell lysis, during SECphi27 infection leads to cell lysis. DtcA (this subunit) probably autophosphorylates upon sensing viral infection, and subsequently transfers the phosphate signal to DtcC which activates it, leading to an antiviral defense; DtcB may scavenge phosphorylation signals from accidental activation of DtcA. In Vibrio alginolyticus, this protein is Detocs histidine-protein kinase DtcA.